A 480-amino-acid chain; its full sequence is Probable glycosyltransferase At5g25310 (480 aa).

At 1-10 the chain is on the cytoplasmic side; sequence MDKFQSKFTR. Residues 11-31 traverse the membrane as a helical; Signal-anchor for type II membrane protein segment; it reads FGFISICFGSIALVLLISHCS. Over 32–480 the chain is Lumenal; that stretch reads TSFFDYSFQK…WLRRLNLKLT (449 aa). Asn85, Asn120, Asn243, Asn271, and Asn281 each carry an N-linked (GlcNAc...) asparagine glycan.

Belongs to the glycosyltransferase 47 family.

The protein localises to the golgi apparatus membrane. Functionally, may be involved in cell wall biosynthesis. In Arabidopsis thaliana (Mouse-ear cress), this protein is Probable glycosyltransferase At5g25310.